The following is a 212-amino-acid chain: Pyridoxine/pyridoxamine 5'-phosphate oxidase (212 aa).

Residues 8 to 11 and Lys-66 contribute to the substrate site; that span reads RREY. Residues 61 to 66, 76 to 77, Arg-82, Lys-83, and Gln-105 each bind FMN; these read RIVLLK and FT. 3 residues coordinate substrate: Tyr-123, Arg-127, and Ser-131. FMN is bound by residues 140-141 and Trp-185; that span reads QS. 191 to 193 serves as a coordination point for substrate; that stretch reads RLH. Arg-195 provides a ligand contact to FMN.

Belongs to the pyridoxamine 5'-phosphate oxidase family. As to quaternary structure, homodimer. FMN serves as cofactor.

It catalyses the reaction pyridoxamine 5'-phosphate + O2 + H2O = pyridoxal 5'-phosphate + H2O2 + NH4(+). The enzyme catalyses pyridoxine 5'-phosphate + O2 = pyridoxal 5'-phosphate + H2O2. It participates in cofactor metabolism; pyridoxal 5'-phosphate salvage; pyridoxal 5'-phosphate from pyridoxamine 5'-phosphate: step 1/1. Its pathway is cofactor metabolism; pyridoxal 5'-phosphate salvage; pyridoxal 5'-phosphate from pyridoxine 5'-phosphate: step 1/1. Functionally, catalyzes the oxidation of either pyridoxine 5'-phosphate (PNP) or pyridoxamine 5'-phosphate (PMP) into pyridoxal 5'-phosphate (PLP). The chain is Pyridoxine/pyridoxamine 5'-phosphate oxidase from Shewanella baltica (strain OS155 / ATCC BAA-1091).